A 468-amino-acid polypeptide reads, in one-letter code: Mothers against decapentaplegic homolog 1 (468 aa).

M1 is subject to N-acetylmethionine. The 125-residue stretch at P12 to P136 folds into the MH1 domain. Positions 64, 109, 121, and 126 each coordinate Zn(2+). Residues N162–M246 form a disordered region. Over residues P188–S210 the composition is skewed to low complexity. The segment covering D221 to D232 has biased composition (pro residues). Polar residues predominate over residues D237 to M246. Positions W274–S468 constitute an MH2 domain. T325 is subject to Phosphothreonine; by MINK1, TNIK and MAP4K4. The L3 loop stretch occupies residues K421–D431. Phosphoserine occurs at positions 466 and 468.

The protein belongs to the dwarfin/SMAD family. As to quaternary structure, found in a complex with SMAD4 and YY1. Interacts with HGS, NANOG and ZCCHC12. Upon C-terminus phosphorylation: forms trimers with another SMAD1 and the co-SMAD SMAD4. Interacts with PEBP2-alpha subunit, CREB-binding protein (CBP), p300, SMURF1, SMURF2, USP15 and HOXC8. Associates with ZNF423 or ZNF521 in response to BMP2 leading to activate transcription of BMP target genes. Interacts with SKOR1. Interacts (via MH2 domain) with LEMD3. Binding to LEMD3 results in at least a partial reduction of receptor-mediated phosphorylation. Forms a ternary complex with PSMB4 and OAZ1 before PSMB4 is incorporated into the 20S proteasome. Interacts (via MH2 domain) with FAM83G (via MH2 domain); in a SMAD4-independent manner. Interacts with ZC3H3. Interacts with TMEM119. Interacts (via MH1 and MH2 domains) with ZNF8. Interacts with RANBP3L; the interaction increases when SMAD1 is not phosphorylated and mediates SMAD1 nuclear export. Interacts with EGR1; this interaction inhibits SMAD1 dephosphorylation. Interacts with SMAD6. Interacts with YAP1. Interacts with MTMR4; negatively regulates BMP signaling through SMAD1 dephosphorylation and retention in endosomes. Post-translationally, phosphorylation of the C-terminal SVS motif by BMP type 1 receptor kinase activates SMAD1 by promoting dissociation from the receptor and trimerization with SMAD4. Phosphorylation by ERK2 MAP kinase in response to EGF or HGF prevents SMAD1 nuclear accumulation and transcriptional activity in response to BMP. Dephosphorylation, probably by PPM1A, induces its export from the nucleus to the cytoplasm. Dephosphorylation is inhibited by association with EGR1. Phosphorylation by CDK8/9 creates binding sites for YAP1, and subsequent phosphorylation by GSK3 switches off YAP1 binding and adds binding sites for SMURF1. Ubiquitinated by SMAD-specific E3 ubiquitin ligase SMURF1, leading to its degradation. Monoubiquitinated, leading to prevent DNA-binding. Deubiquitination by USP15 alleviates inhibition and promotes activation of TGF-beta target genes. Dephosphorylation, probably by PPM1A, induces its export from the nucleus to the cytoplasm. Phospho-SMAD1 is ubiquitinated by CHIP leading to disruption of the SMAD1-SMAD4 complex. Ubiquitous; present in liver, lung, stomach and spleen with lower level in heart, testes and skeletal muscle.

Its subcellular location is the cytoplasm. It localises to the nucleus. Its function is as follows. Transcriptional modulator that plays a role in various cellular processes, including embryonic development, cell differentiation, and tissue homeostasis. Upon BMP ligand binding to their receptors at the cell surface, is phosphorylated by activated type I BMP receptors (BMPRIs) and associates with SMAD4 to form an heteromeric complex which translocates into the nucleus acting as transcription factor. In turn, the hetero-trimeric complex recognizes cis-regulatory elements containing Smad Binding Elements (SBEs) to modulate the outcome of the signaling network. SMAD1/OAZ1/PSMB4 complex mediates the degradation of the CREBBP/EP300 repressor SNIP1. Positively regulates BMP4-induced expression of odontogenic development regulator MSX1 following IPO7-mediated nuclear import. The chain is Mothers against decapentaplegic homolog 1 (Smad1) from Rattus norvegicus (Rat).